Reading from the N-terminus, the 169-residue chain is Inorganic pyrophosphatase (169 aa).

Residues lysine 26, arginine 40, and tyrosine 52 each coordinate substrate. The Mg(2+) site is built by aspartate 62, aspartate 67, and aspartate 99. A substrate-binding site is contributed by tyrosine 138.

Belongs to the PPase family. In terms of assembly, homohexamer. The cofactor is Mg(2+).

The protein resides in the cytoplasm. The enzyme catalyses diphosphate + H2O = 2 phosphate + H(+). Functionally, catalyzes the hydrolysis of inorganic pyrophosphate (PPi) forming two phosphate ions. The sequence is that of Inorganic pyrophosphatase from Thermoplasma volcanium (strain ATCC 51530 / DSM 4299 / JCM 9571 / NBRC 15438 / GSS1).